Consider the following 294-residue polypeptide: Probable 2-(5''-triphosphoribosyl)-3'-dephosphocoenzyme-A synthase (294 aa).

Belongs to the CitG/MdcB family.

The enzyme catalyses 3'-dephospho-CoA + ATP = 2'-(5''-triphospho-alpha-D-ribosyl)-3'-dephospho-CoA + adenine. The protein is Probable 2-(5''-triphosphoribosyl)-3'-dephosphocoenzyme-A synthase of Streptococcus equi subsp. zooepidemicus (strain H70).